Reading from the N-terminus, the 551-residue chain is ATP-dependent RNA helicase MRH4, mitochondrial (551 aa).

Residues 1 to 13 (MPPNLTPRSFNRD) constitute a mitochondrion transit peptide. The Q motif motif lies at 43–73 (RTFDDFGLEEGLVKSLKGLYGEDGKTTPIET). The region spanning 85–293 (ASAPIGSQRV…TTNPFFTKKE (209 aa)) is the Helicase ATP-binding domain. Residue 98 to 105 (AETGSGKT) participates in ATP binding. The short motif at 242-245 (DEAD) is the DEAD box element. The region spanning 334-551 (TLAEDAKAAK…VGAMGKRVRT (218 aa)) is the Helicase C-terminal domain. The disordered stretch occupies residues 504–527 (LGEGAKNNKGGKGQGPLKKDGKTA).

Belongs to the DEAD box helicase family. MRH4 subfamily.

It is found in the mitochondrion. It carries out the reaction ATP + H2O = ADP + phosphate + H(+). In terms of biological role, ATP-binding RNA helicase involved in mitochondrial RNA metabolism. Required for maintenance of mitochondrial DNA. The chain is ATP-dependent RNA helicase MRH4, mitochondrial (MRH4) from Cryptococcus neoformans var. neoformans serotype D (strain B-3501A) (Filobasidiella neoformans).